Consider the following 661-residue polypeptide: Peroxisomal acyl-coenzyme A oxidase 1 (661 aa).

N6-succinyllysine occurs at positions 89 and 90. Position 139 (threonine 139) interacts with FAD. N6-succinyllysine is present on lysine 159. FAD is bound at residue glycine 178. Lysine 216 is subject to N6-acetyllysine. Position 241 is an N6-succinyllysine (lysine 241). N6-acetyllysine is present on residues lysine 255, lysine 267, and lysine 272. Lysine 349 bears the N6-succinyllysine mark. The Proton acceptor role is filled by glutamate 421. An N6-acetyllysine; alternate mark is found at lysine 437, lysine 446, lysine 512, and lysine 637. 4 positions are modified to N6-succinyllysine; alternate: lysine 437, lysine 446, lysine 512, and lysine 637. Lysine 643 is subject to N6-succinyllysine. Phosphoserine is present on serine 649. Residue lysine 652 is modified to N6-acetyllysine. Lysine 655 carries the N6-succinyllysine modification. A Microbody targeting signal motif is present at residues 659-661; the sequence is SKL.

This sequence belongs to the acyl-CoA oxidase family. Homodimer. Interacts with LONP2. It depends on FAD as a cofactor.

It localises to the peroxisome. It carries out the reaction a 2,3-saturated acyl-CoA + O2 = a (2E)-enoyl-CoA + H2O2. The enzyme catalyses hexadecanoyl-CoA + O2 = (2E)-hexadecenoyl-CoA + H2O2. It catalyses the reaction dodecanoyl-CoA + O2 = (2E)-dodecenoyl-CoA + H2O2. The catalysed reaction is octanoyl-CoA + O2 = (2E)-octenoyl-CoA + H2O2. It carries out the reaction decanoyl-CoA + O2 = (2E)-decenoyl-CoA + H2O2. The enzyme catalyses tetradecanoyl-CoA + O2 = (2E)-tetradecenoyl-CoA + H2O2. It catalyses the reaction hexadecanedioyl-CoA + O2 = (2E)-hexadecenedioyl-CoA + H2O2. The catalysed reaction is tetracosanoyl-CoA + O2 = (2E)-tetracosenoyl-CoA + H2O2. It carries out the reaction glutaryl-CoA + O2 = (2E)-glutaconyl-CoA + H2O2. The enzyme catalyses hexanoyl-CoA + O2 = (2E)-hexenoyl-CoA + H2O2. It catalyses the reaction octadecanoyl-CoA + O2 = (2E)-octadecenoyl-CoA + H2O2. The catalysed reaction is (5Z,8Z,11Z,14Z,17Z)-eicosapentaenoyl-CoA + O2 = (2E,5Z,8Z,11Z,14Z,17Z)-icosahexaenoyl-CoA + H2O2. It carries out the reaction (6Z,9Z,12Z,15Z,18Z,21Z)-tetracosahexaenoyl-CoA + O2 = (2E,6Z,9Z,12Z,15Z,18Z,21Z)-tetracosaheptaenoyl-CoA + H2O2. The protein operates within lipid metabolism; peroxisomal fatty acid beta-oxidation. Functionally, involved in the initial and rate-limiting step of peroxisomal beta-oxidation of straight-chain saturated and unsaturated very-long-chain fatty acids. Catalyzes the desaturation of fatty acyl-CoAs such as palmitoyl-CoA (hexadecanoyl-CoA) to 2-trans-enoyl-CoAs ((2E)-enoyl-CoAs) such as (2E)-hexadecenoyl-CoA, and donates electrons directly to molecular oxygen (O(2)), thereby producing hydrogen peroxide (H(2)O(2)). Isoform 2 shows higher activity with hexadecanoyl-CoA as substrate than isoform 1. This chain is Peroxisomal acyl-coenzyme A oxidase 1 (ACOX1), found in Phascolarctos cinereus (Koala).